We begin with the raw amino-acid sequence, 225 residues long: Small ribosomal subunit protein uS3 (225 aa).

In terms of domain architecture, KH type-2 spans 38-106; sequence LRKFLQGKLQ…EVSLNIVEIR (69 aa).

Belongs to the universal ribosomal protein uS3 family. As to quaternary structure, part of the 30S ribosomal subunit. Forms a tight complex with proteins S10 and S14.

Functionally, binds the lower part of the 30S subunit head. Binds mRNA in the 70S ribosome, positioning it for translation. This is Small ribosomal subunit protein uS3 from Rhodospirillum centenum (strain ATCC 51521 / SW).